Here is a 100-residue protein sequence, read N- to C-terminus: Protein E7 (100 aa).

The segment at 1-43 is E7 terminal domain; it reads MIGKQATLCDIVLEELVLPIDLHCHEELPELPEELEESVVEEE. An LXCXE motif; interaction with host RB1 and TMEM173/STING motif is present at residues 22–26; that stretch reads LHCHE. Residues 55 to 91 fold into a zinc finger; that stretch reads CGGCDTKLKLYILATLSGIRDFQTSLLGPVKLLCPTC. Positions 73 to 81 match the Nuclear export signal motif; that stretch reads IRDFQTSLL.

This sequence belongs to the papillomaviridae E7 protein family. As to quaternary structure, homodimer. Homooligomer. Interacts with host RB1; this interaction induces dissociation of RB1-E2F1 complex thereby disrupting RB1 activity. Interacts with host EP300; this interaction represses EP300 transcriptional activity. Interacts with protein E2; this interaction inhibits E7 oncogenic activity. Interacts with host TMEM173/STING; this interaction impairs the ability of TMEM173/STING to sense cytosolic DNA and promote the production of type I interferon (IFN-alpha and IFN-beta). In terms of processing, highly phosphorylated.

The protein resides in the host cytoplasm. It localises to the host nucleus. Functionally, plays a role in viral genome replication by driving entry of quiescent cells into the cell cycle. Stimulation of progression from G1 to S phase allows the virus to efficiently use the cellular DNA replicating machinery to achieve viral genome replication. E7 protein has both transforming and trans-activating activities. Induces the disassembly of the E2F1 transcription factor from RB1, with subsequent transcriptional activation of E2F1-regulated S-phase genes. Interferes with host histone deacetylation mediated by HDAC1 and HDAC2, leading to transcription activation. Also plays a role in the inhibition of both antiviral and antiproliferative functions of host interferon alpha. Interaction with host TMEM173/STING impairs the ability of TMEM173/STING to sense cytosolic DNA and promote the production of type I interferon (IFN-alpha and IFN-beta). The chain is Protein E7 from Human papillomavirus 22.